Consider the following 256-residue polypeptide: MTDVSRVLKEARDQGRLTTLDYANLIFDDFMELHGDRHFSDDGAIVGGLAYLAGQPVTVIGIQKGKNLQDNLARNFGQPNPEGYRKALRLMKQAEKFGRPVVTFINTAGAYPGVGAEERGQGEAIAKNLMEMSDLKVPIIAIIIGEGGSGGALALAVADQVWMLENTMYAVLSPEGFASILWKDGSRATEAAELMKITAGELYKMGIVDRIIPEHGYFSSEIVDIIKANLIEQITSLQAKPLDQLLDERYQRFRKY.

In terms of domain architecture, CoA carboxyltransferase C-terminal spans 1–236 (MTDVSRVLKE…KANLIEQITS (236 aa)).

Belongs to the AccA family. In terms of assembly, acetyl-CoA carboxylase is a heterohexamer composed of biotin carboxyl carrier protein (AccB), biotin carboxylase (AccC) and two subunits each of ACCase subunit alpha (AccA) and ACCase subunit beta (AccD).

The protein resides in the cytoplasm. The enzyme catalyses N(6)-carboxybiotinyl-L-lysyl-[protein] + acetyl-CoA = N(6)-biotinyl-L-lysyl-[protein] + malonyl-CoA. It participates in lipid metabolism; malonyl-CoA biosynthesis; malonyl-CoA from acetyl-CoA: step 1/1. Functionally, component of the acetyl coenzyme A carboxylase (ACC) complex. First, biotin carboxylase catalyzes the carboxylation of biotin on its carrier protein (BCCP) and then the CO(2) group is transferred by the carboxyltransferase to acetyl-CoA to form malonyl-CoA. This chain is Acetyl-coenzyme A carboxylase carboxyl transferase subunit alpha, found in Streptococcus pyogenes serotype M12 (strain MGAS2096).